The sequence spans 155 residues: Ribosomal RNA large subunit methyltransferase H (155 aa).

S-adenosyl-L-methionine contacts are provided by residues leucine 72, glycine 103, and 122 to 127; that span reads LSPLTL.

The protein belongs to the RNA methyltransferase RlmH family. In terms of assembly, homodimer.

The protein localises to the cytoplasm. It carries out the reaction pseudouridine(1915) in 23S rRNA + S-adenosyl-L-methionine = N(3)-methylpseudouridine(1915) in 23S rRNA + S-adenosyl-L-homocysteine + H(+). Functionally, specifically methylates the pseudouridine at position 1915 (m3Psi1915) in 23S rRNA. In Histophilus somni (strain 129Pt) (Haemophilus somnus), this protein is Ribosomal RNA large subunit methyltransferase H.